Consider the following 385-residue polypeptide: Chaperone protein DnaJ (385 aa).

The J domain maps to 5-70 (DYYEILEITR…SKRQIYDKYG (66 aa)). Residues 136–213 (GCKKEIHNSF…CKGSGFEISE (78 aa)) form a CR-type zinc finger. Positions 149, 152, 165, 168, 187, 190, 201, and 204 each coordinate Zn(2+). CXXCXGXG motif repeat units follow at residues 149–156 (CSDCKGTG), 165–172 (CKDCGGKG), 187–194 (CPTCKGEG), and 201–208 (CSKCKGSG).

It belongs to the DnaJ family. In terms of assembly, homodimer. Requires Zn(2+) as cofactor.

The protein resides in the cytoplasm. In terms of biological role, participates actively in the response to hyperosmotic and heat shock by preventing the aggregation of stress-denatured proteins and by disaggregating proteins, also in an autonomous, DnaK-independent fashion. Unfolded proteins bind initially to DnaJ; upon interaction with the DnaJ-bound protein, DnaK hydrolyzes its bound ATP, resulting in the formation of a stable complex. GrpE releases ADP from DnaK; ATP binding to DnaK triggers the release of the substrate protein, thus completing the reaction cycle. Several rounds of ATP-dependent interactions between DnaJ, DnaK and GrpE are required for fully efficient folding. Also involved, together with DnaK and GrpE, in the DNA replication of plasmids through activation of initiation proteins. The sequence is that of Chaperone protein DnaJ from Helicobacter hepaticus (strain ATCC 51449 / 3B1).